Here is a 432-residue protein sequence, read N- to C-terminus: EF-hand calcium-binding domain-containing protein 3 (432 aa).

2 consecutive EF-hand domains span residues 45–80 (AQLE…LGMN) and 81–116 (LNAY…KKLF). Ca(2+) contacts are provided by D94, D96, D98, K100, and D105. Y273 is modified (phosphotyrosine). The segment at 394–432 (NVNKTSPSNSGLSSPSDLSESDPETGRKRKRKSSRGFRQ) is disordered. Over residues 399–411 (SPSNSGLSSPSDL) the composition is skewed to low complexity. Over residues 420–432 (RKRKRKSSRGFRQ) the composition is skewed to basic residues.

The polypeptide is EF-hand calcium-binding domain-containing protein 3 (Efcab3) (Rattus norvegicus (Rat)).